The chain runs to 330 residues: Induced myeloid leukemia cell differentiation protein Mcl-1 homolog (330 aa).

The PEST-like stretch occupies residues 85-155 (LAVPPEEMAA…PPEEEDDELY (71 aa)). At Ser-101 the chain carries Phosphoserine. Lys-116 participates in a covalent cross-link: Glycyl lysine isopeptide (Lys-Gly) (interchain with G-Cter in ubiquitin). The segment at 129-153 (EAAKSSGADGSLPSTPPPPEEEDDE) is disordered. Residue Ser-139 is modified to Phosphoserine; by GSK3-alpha and GSK3-beta. Ser-142 carries the phosphoserine modification. The residue at position 143 (Thr-143) is a Phosphothreonine; by MAPK. Glycyl lysine isopeptide (Lys-Gly) (interchain with G-Cter in ubiquitin) cross-links involve residues Lys-174 and Lys-177. The BH3 signature appears at 189–203 (ALETLRRVGDGVQRN). The BH1 motif lies at 232–252 (HVFKDGVTNWGRIVTLISFGA). The BH2 motif lies at 284-299 (DWLVKQRGWDGFVEFF). The chain crosses the membrane as a helical span at residues 307 to 329 (GIRNVLLAFAGVAGVGAGLAYLI).

It belongs to the Bcl-2 family. In terms of assembly, interacts with HIF3A (via C-terminus domain). Interacts with BOK, BIK, BAX, BAK1, and TPT1. Interacts with unphosphorylated BAD. Interacts with BMF, BBC3 and PMAIP1. Interacts with BOP. Interacts with BCL2L11; may sequester BCL2L11 to prevent its pro-apoptotic activity. Interacts with GIMAP5 and HSPA8/HSC70; the interaction between HSPA8 and MCL1 is impaired in the absence of GIMAP5. Post-translationally, cleaved by CASP3 during apoptosis, yielding a pro-apoptotic C-terminal fragment. In terms of processing, rapidly degraded in the absence of phosphorylation in the PEST region. Phosphorylated on Ser-139, by GSK3, in response to IL3/interleukin-3 withdrawal. Phosphorylation at Ser-139 induces ubiquitination and proteasomal degradation, abrogating the anti-apoptotic activity. Treatment with taxol or okadaic acid induces phosphorylation on additional sites. Post-translationally, ubiquitinated. Ubiquitination is induced by phosphorylation at Ser-139. Deubiquitinated by USP20; leading to increased stability. As to expression, ubiquitous. Highly expressed in heart, spleen, lung, liver, skeletal muscle and kidney. Detected at lower levels in brain, ovary, oviduct and testis.

Its subcellular location is the membrane. It localises to the cytoplasm. The protein resides in the mitochondrion. It is found in the nucleus. The protein localises to the nucleoplasm. In terms of biological role, involved in the regulation of apoptosis versus cell survival, and in the maintenance of viability but not of proliferation. Mediates its effects by interactions with a number of other regulators of apoptosis. The polypeptide is Induced myeloid leukemia cell differentiation protein Mcl-1 homolog (Mcl1) (Rattus norvegicus (Rat)).